The following is a 145-amino-acid chain: Putative pre-16S rRNA nuclease (145 aa).

Belongs to the YqgF nuclease family.

The protein localises to the cytoplasm. Functionally, could be a nuclease involved in processing of the 5'-end of pre-16S rRNA. This Sulfurihydrogenibium sp. (strain YO3AOP1) protein is Putative pre-16S rRNA nuclease.